A 204-amino-acid chain; its full sequence is Large ribosomal subunit protein uL13 (204 aa).

It belongs to the universal ribosomal protein uL13 family.

The sequence is that of Large ribosomal subunit protein uL13 (RpL13A) from Choristoneura parallela (Spotted fireworm moth).